A 477-amino-acid polypeptide reads, in one-letter code: Bifunctional protein HldE (477 aa).

Positions 1 to 318 are ribokinase; the sequence is MKVTLPEFER…ENAVRGRAET (318 aa). The residue at position 179 (Lys179) is an N6-acetyllysine. 195 to 198 provides a ligand contact to ATP; it reads NLSE. Asp264 is an active-site residue. Residues 344–477 form a cytidylyltransferase region; it reads MTNGVFDILH…IKKIQQDKKG (134 aa).

The protein in the N-terminal section; belongs to the carbohydrate kinase PfkB family. This sequence in the C-terminal section; belongs to the cytidylyltransferase family. As to quaternary structure, homodimer.

The enzyme catalyses D-glycero-beta-D-manno-heptose 7-phosphate + ATP = D-glycero-beta-D-manno-heptose 1,7-bisphosphate + ADP + H(+). The catalysed reaction is D-glycero-beta-D-manno-heptose 1-phosphate + ATP + H(+) = ADP-D-glycero-beta-D-manno-heptose + diphosphate. Its pathway is nucleotide-sugar biosynthesis; ADP-L-glycero-beta-D-manno-heptose biosynthesis; ADP-L-glycero-beta-D-manno-heptose from D-glycero-beta-D-manno-heptose 7-phosphate: step 1/4. It functions in the pathway nucleotide-sugar biosynthesis; ADP-L-glycero-beta-D-manno-heptose biosynthesis; ADP-L-glycero-beta-D-manno-heptose from D-glycero-beta-D-manno-heptose 7-phosphate: step 3/4. In terms of biological role, catalyzes the phosphorylation of D-glycero-D-manno-heptose 7-phosphate at the C-1 position to selectively form D-glycero-beta-D-manno-heptose-1,7-bisphosphate. Functionally, catalyzes the ADP transfer from ATP to D-glycero-beta-D-manno-heptose 1-phosphate, yielding ADP-D-glycero-beta-D-manno-heptose. The protein is Bifunctional protein HldE of Shigella dysenteriae serotype 1 (strain Sd197).